A 186-amino-acid chain; its full sequence is Adenylate kinase (186 aa).

ATP is bound at residue 12–17 (GAGKGT). Residues 32–61 (STGDLLRAEVNAQSPLGKEAALIMNKGELV) are NMP. AMP is bound by residues Thr33, Arg38, 59 to 61 (ELV), 86 to 89 (GFPR), and Gln93. The segment at 127–133 (SRGRSDD) is LID. An ATP-binding site is contributed by Arg128. AMP contacts are provided by Arg130 and Arg141. Gly169 lines the ATP pocket.

Belongs to the adenylate kinase family. In terms of assembly, monomer.

The protein resides in the cytoplasm. The catalysed reaction is AMP + ATP = 2 ADP. The protein operates within purine metabolism; AMP biosynthesis via salvage pathway; AMP from ADP: step 1/1. In terms of biological role, catalyzes the reversible transfer of the terminal phosphate group between ATP and AMP. Plays an important role in cellular energy homeostasis and in adenine nucleotide metabolism. In Prochlorococcus marinus (strain MIT 9211), this protein is Adenylate kinase.